The sequence spans 157 residues: MMDILMYLFETYIQSDVELLVDQDELSDELSRAGFHQDDIYKALNWLEKLAALQETETIPYMNNSAITSIRVYIPQEMARMDVTCRGFLTYLEQIHVLSADTREMVIDRVMELETSDFVLDDLKWIILMVLFNAPGNENAYTQMEELLYGAEDGYIH.

It belongs to the Smg family.

This is Protein Smg homolog from Photobacterium profundum (strain SS9).